The primary structure comprises 131 residues: Large ribosomal subunit protein uL24 (131 aa).

It belongs to the universal ribosomal protein uL24 family. In terms of assembly, part of the 50S ribosomal subunit.

Its function is as follows. One of two assembly initiator proteins, it binds directly to the 5'-end of the 23S rRNA, where it nucleates assembly of the 50S subunit. In terms of biological role, located at the polypeptide exit tunnel on the outside of the subunit. The sequence is that of Large ribosomal subunit protein uL24 from Korarchaeum cryptofilum (strain OPF8).